A 423-amino-acid chain; its full sequence is Serine--tRNA ligase (423 aa).

231-233 (TAE) serves as a coordination point for L-serine. 262 to 264 (RSE) is an ATP binding site. Glu285 lines the L-serine pocket. Residue 349–352 (EISS) participates in ATP binding. Ser384 provides a ligand contact to L-serine.

Belongs to the class-II aminoacyl-tRNA synthetase family. Type-1 seryl-tRNA synthetase subfamily. Homodimer. The tRNA molecule binds across the dimer.

It localises to the cytoplasm. It carries out the reaction tRNA(Ser) + L-serine + ATP = L-seryl-tRNA(Ser) + AMP + diphosphate + H(+). The enzyme catalyses tRNA(Sec) + L-serine + ATP = L-seryl-tRNA(Sec) + AMP + diphosphate + H(+). Its pathway is aminoacyl-tRNA biosynthesis; selenocysteinyl-tRNA(Sec) biosynthesis; L-seryl-tRNA(Sec) from L-serine and tRNA(Sec): step 1/1. Catalyzes the attachment of serine to tRNA(Ser). Is also able to aminoacylate tRNA(Sec) with serine, to form the misacylated tRNA L-seryl-tRNA(Sec), which will be further converted into selenocysteinyl-tRNA(Sec). This chain is Serine--tRNA ligase, found in Acinetobacter baylyi (strain ATCC 33305 / BD413 / ADP1).